The sequence spans 924 residues: Autophagy-related protein 9B (924 aa).

The tract at residues 1–144 (MVSRMGWGGR…QDSPGLRVGP (144 aa)) is disordered. Residues 1 to 207 (MVSRMGWGGR…KIYSYHQRNG (207 aa)) are Cytoplasmic-facing. The span at 17 to 27 (WGDLGPGSVPL) shows a compositional bias: low complexity. Residues 28–40 (LPMPLPPPPPPSC) show a composition bias toward pro residues. Polar residues predominate over residues 78 to 88 (LQGTGASQSCH). Low complexity predominate over residues 98-113 (PTQAQPAMTPASASPS). The Tyrosine-based sorting signal signature appears at 151–154 (YERL). Residues 208–228 (FACILLEDVFQLGQFIFIVTF) traverse the membrane as a helical segment. Residues 229-276 (TTFLLRCVDYNVLFANQPSNHTRPGPFHSKVTLSDAILPSAQCAERIR) are Lumenal-facing. The helical transmembrane segment at 277 to 297 (SSPLLVLLLVLAAGFWLVQLL) threads the bilayer. Over 298 to 438 (RSVCNLFSYW…GALAARWGRT (141 aa)) the chain is Cytoplasmic. The stretch at 439-459 (VLLLAALNLALSPLVLAWQVL) is an intramembrane region. Residues 460–526 (HVFYSHVELL…AAPPAPLRTL (67 aa)) are Cytoplasmic-facing. The helical transmembrane segment at 527-547 (LARQLVFFAGALFAALLVLTV) threads the bilayer. The Lumenal portion of the chain corresponds to 548-551 (YDED). Residues 552-572 (VLAVEHVLTAMTALGVTATVA) traverse the membrane as a helical segment. Residues 573–624 (RSFIPEEQCQGRAPQLLLQTALAHMHYLPEEPGPGGRDRAYRQMAQLLQYRA) are Cytoplasmic-facing. An intramembrane segment occupies 625–645 (VSLLEELLSPLLTPLFLLFWF). The Cytoplasmic segment spans residues 646–924 (RPRALEIIDF…KEPDRASCTD (279 aa)). A disordered region spans residues 847 to 924 (QQEPWGEAAA…KEPDRASCTD (78 aa)). A compositionally biased stretch (low complexity) spans 878-890 (SWSSDGSSPASSP). A compositionally biased stretch (basic and acidic residues) spans 913 to 924 (TQKEPDRASCTD).

The protein belongs to the ATG9 family. In terms of assembly, homotrimer; forms a homotrimer with a central pore that forms a path between the two membrane leaflets. Highly expressed in placenta (trophoblast cells) and pituitary gland. Not expressed in vascular endothelial.

Its subcellular location is the preautophagosomal structure membrane. The catalysed reaction is a 1,2-diacyl-sn-glycero-3-phosphocholine(in) = a 1,2-diacyl-sn-glycero-3-phosphocholine(out). The enzyme catalyses a 1,2-diacyl-sn-glycero-3-phospho-L-serine(in) = a 1,2-diacyl-sn-glycero-3-phospho-L-serine(out). It catalyses the reaction a 1,2-diacyl-sn-glycero-3-phosphoethanolamine(in) = a 1,2-diacyl-sn-glycero-3-phosphoethanolamine(out). Functionally, phospholipid scramblase involved in autophagy by mediating autophagosomal membrane expansion. Cycles between the preautophagosomal structure/phagophore assembly site (PAS) and the cytoplasmic vesicle pool and supplies membrane for the growing autophagosome. Lipid scramblase activity plays a key role in preautophagosomal structure/phagophore assembly by distributing the phospholipids that arrive through ATG2 (ATG2A or ATG2B) from the cytoplasmic to the luminal leaflet of the bilayer, thereby driving autophagosomal membrane expansion. In addition to autophagy, also plays a role in necrotic cell death. This chain is Autophagy-related protein 9B (ATG9B), found in Homo sapiens (Human).